We begin with the raw amino-acid sequence, 407 residues long: Peptidase T (407 aa).

Histidine 78 contributes to the Zn(2+) binding site. The active site involves aspartate 80. Aspartate 139 is a Zn(2+) binding site. Residue glutamate 173 is the Proton acceptor of the active site. Positions 174, 196, and 378 each coordinate Zn(2+).

The protein belongs to the peptidase M20B family. Zn(2+) is required as a cofactor.

The protein localises to the cytoplasm. The catalysed reaction is Release of the N-terminal residue from a tripeptide.. In terms of biological role, cleaves the N-terminal amino acid of tripeptides. This Macrococcus caseolyticus (strain JCSC5402) (Macrococcoides caseolyticum) protein is Peptidase T.